Reading from the N-terminus, the 519-residue chain is Probable WRKY transcription factor 33 (519 aa).

Disordered stretches follow at residues 1 to 34 (MAASFLTMDNSRTRQNMNGSANWSQQSGRTSTSS) and 123 to 212 (SSGV…CTFP). Positions 7–34 (TMDNSRTRQNMNGSANWSQQSGRTSTSS) are enriched in polar residues. Positions 130–142 (TTTTTTTTTTTTT) are enriched in low complexity. The span at 164-174 (TETRPNNQAVS) shows a compositional bias: polar residues. The span at 178–188 (REQRKGEDGYN) shows a compositional bias: basic and acidic residues. Residues 178–242 (REQRKGEDGY…YKGSHNHPKP (65 aa)) constitute a DNA-binding region (WRKY 1). Residues cysteine 209, cysteine 214, histidine 237, and histidine 239 each coordinate Zn(2+). Disordered regions lie at residues 232–255 (VYKGSHNHPKPQSTRRSSSSSSTF) and 267–349 (NRQA…REPR). Low complexity predominate over residues 245–254 (TRRSSSSSST). The span at 269–299 (QASSDQPNSNNSFHQSDSFGMQQEDNTTSDS) shows a compositional bias: polar residues. Basic and acidic residues predominate over residues 323-332 (PEAKRWKGDN). The segment at residues 356-421 (SDIDILDDGY…YEGKHNHDVP (66 aa)) is a DNA-binding region (WRKY 2). Positions 387, 392, 416, and 418 each coordinate Zn(2+).

This sequence belongs to the WRKY group I family. As to quaternary structure, interacts with MKS1. Interacts with ATG18A. Interacts with SIB1 and SIB2. Interacts with VQ1 and VQ10. Post-translationally, phosphorylated by MPK4. Phosphorylated on serine residues by MPK3 and MPK6 following infection with the necrotrophic fungal pathogen B.cinerea. In terms of tissue distribution, highly expressed in roots, leaves and flowers, and at lower levels in stems, siliques and seeds.

It localises to the nucleus. In terms of biological role, transcription factor. Interacts specifically with the W box (5'-TTGAC[CT]-3'), a frequently occurring elicitor-responsive cis-acting element. Involved in defense responses. Required for resistance to the necrotrophic fungal pathogen B.cinerea. Regulates the antagonistic relationship between defense pathways mediating responses to the bacterial pathogen P. syringae and the necrotrophic pathogen B.cinerea. Required for the phytoalexin camalexin synthesis following infection with B.cinerea. Acts as a positive regulator of the camalexin biosynthetic genes PAD3 (CYP71B15) and CYP71A13 by binding to their promoters. Acts downstream of MPK3 and MPK6 in reprogramming the expression of camalexin biosynthetic genes, which drives the metabolic flow to camalexin production. Functions with WRKY25 as positive regulator of salt stress response and abscisic acid (ABA) signaling. Functions with WRKY25 and WRKY26 as positive regulator of plant thermotolerance by partially participating in ethylene-response signal transduction pathway. The DNA-binding activity of WRKY33 is increased by SIB1 and SIB2. The polypeptide is Probable WRKY transcription factor 33 (WRKY33) (Arabidopsis thaliana (Mouse-ear cress)).